Reading from the N-terminus, the 266-residue chain is Gasdermin bGSDM (266 aa).

A lipid anchor (S-palmitoyl cysteine) is attached at cysteine 4. The next 4 membrane-spanning stretches (beta stranded) occupy residues 69–85, 97–114, 163–180, and 189–205; these read INGQ…GINI, AGIE…FEFS, EFTV…QLDV, and GKLK…TVTY. Residues 238-266 are C-terminal region; the sequence is AMALDAAGGVMPSDSALLDEGGLLDLEGF.

The protein belongs to the bacterial gasdermin family. As to quaternary structure, monomer in solution. In terms of assembly, homooligomer; forms homooligomeric ring-shaped pores when inserted in membranes with 48-54 subunits per ring. Post-translationally, palmitoylation helps stabilize the inactive state; may self palmitoylate. Palmitoylation plays a significant role in pore formation.

It localises to the cytoplasm. It is found in the cell inner membrane. The full-length protein before cleavage is inactive: intramolecular interactions between the N-terminal domain and the C-terminal region as well as the lipid modification, mediate autoinhibition. The pyroptosis-like-inducing activity is carried by the released N-terminal domain (Gasdermin bGSDM, N-terminus). In terms of biological role, precursor of a pore-forming protein involved in defense against bacteriophages. Expression of bGSDM and the neighboring protease gene (Ga0334635_1659) is toxic in E.coli. Cleavage of this precursor by its dedicated protease releases the active moiety (gasdermin bGSDM, N-terminus) which inserts into membranes, forming pores and triggering cell death. Its function is as follows. Pore-forming protein that causes membrane permeabilization, probably via a pyroptosis-like activity. Makes ring-like pores with an interior pore diameter of 200-300 Angstroms, when integrated in liposomes. The sequence is that of Gasdermin bGSDM from Vitiosangium sp. (strain GDMCC 1.1324).